The primary structure comprises 358 residues: Methionine import ATP-binding protein MetN (358 aa).

Residues 14–255 (VVFDAVSKRF…SRHETTRALL (242 aa)) enclose the ABC transporter domain. Residue 52–59 (GRSGAGKS) coordinates ATP.

This sequence belongs to the ABC transporter superfamily. Methionine importer (TC 3.A.1.24) family. In terms of assembly, the complex is composed of two ATP-binding proteins (MetN), two transmembrane proteins (MetI) and a solute-binding protein (MetQ).

It is found in the cell inner membrane. The catalysed reaction is L-methionine(out) + ATP + H2O = L-methionine(in) + ADP + phosphate + H(+). It carries out the reaction D-methionine(out) + ATP + H2O = D-methionine(in) + ADP + phosphate + H(+). In terms of biological role, part of the ABC transporter complex MetNIQ involved in methionine import. Responsible for energy coupling to the transport system. The sequence is that of Methionine import ATP-binding protein MetN from Rhizobium meliloti (strain 1021) (Ensifer meliloti).